The following is a 134-amino-acid chain: Small ribosomal subunit protein uS8c (134 aa).

Belongs to the universal ribosomal protein uS8 family. In terms of assembly, part of the 30S ribosomal subunit.

It localises to the plastid. It is found in the chloroplast. In terms of biological role, one of the primary rRNA binding proteins, it binds directly to 16S rRNA central domain where it helps coordinate assembly of the platform of the 30S subunit. This is Small ribosomal subunit protein uS8c (rps8) from Lactuca sativa (Garden lettuce).